The chain runs to 196 residues: Heat shock protein beta-8 (196 aa).

The tract at residues 1 to 34 is disordered; it reads MADGQMPFPCHYTSRRRRDPFRDSPLSSRLLDDG. The segment covering 23-34 has biased composition (low complexity); it reads DSPLSSRLLDDG. A phosphoserine mark is found at Ser-24 and Ser-57. Thr-63 bears the Phosphothreonine mark. 2 positions are modified to asymmetric dimethylarginine: Arg-71 and Arg-78. Residues 74-185 enclose the sHSP domain; the sequence is TAMTRFGVPA…PFGESSFNNE (112 aa). Position 87 is a phosphoserine (Ser-87). A disordered region spans residues 176–196; that stretch reads PFGESSFNNELPQDGQEVTCT. Polar residues predominate over residues 178-196; the sequence is GESSFNNELPQDGQEVTCT.

The protein belongs to the small heat shock protein (HSP20) family. As to quaternary structure, monomer. Forms a ternary complex with BAG3 and HSPA1A. Component of the chaperone-assisted selective autophagy (CASA) complex consisting of BAG3, HSPA8/HSC70, HSPB8 and STUB1/CHIP. Interacts with HSPB1. Interacts with DNAJB6. Interacts with BAG3. In terms of processing, phosphorylated.

It localises to the cytoplasm. Its subcellular location is the nucleus. In terms of biological role, involved in the chaperone-assisted selective autophagy (CASA), a crucial process for protein quality control, particularly in mechanical strained cells and tissues such as muscle. Displays temperature-dependent chaperone activity. The protein is Heat shock protein beta-8 (HSPB8) of Bos taurus (Bovine).